Here is a 358-residue protein sequence, read N- to C-terminus: Uroporphyrinogen decarboxylase (358 aa).

Substrate-binding positions include 36–40 (RQAGR), aspartate 85, tyrosine 160, serine 215, and histidine 338.

This sequence belongs to the uroporphyrinogen decarboxylase family. Homodimer.

It localises to the cytoplasm. The enzyme catalyses uroporphyrinogen III + 4 H(+) = coproporphyrinogen III + 4 CO2. It functions in the pathway porphyrin-containing compound metabolism; protoporphyrin-IX biosynthesis; coproporphyrinogen-III from 5-aminolevulinate: step 4/4. Functionally, catalyzes the decarboxylation of four acetate groups of uroporphyrinogen-III to yield coproporphyrinogen-III. In Corynebacterium glutamicum (strain ATCC 13032 / DSM 20300 / JCM 1318 / BCRC 11384 / CCUG 27702 / LMG 3730 / NBRC 12168 / NCIMB 10025 / NRRL B-2784 / 534), this protein is Uroporphyrinogen decarboxylase.